The primary structure comprises 200 residues: Large ribosomal subunit protein uL4 (200 aa).

The tract at residues 42 to 65 is disordered; the sequence is TRAQKTRSEVSGGGAKPWRQKGTG.

The protein belongs to the universal ribosomal protein uL4 family. As to quaternary structure, part of the 50S ribosomal subunit.

Functionally, one of the primary rRNA binding proteins, this protein initially binds near the 5'-end of the 23S rRNA. It is important during the early stages of 50S assembly. It makes multiple contacts with different domains of the 23S rRNA in the assembled 50S subunit and ribosome. Its function is as follows. Forms part of the polypeptide exit tunnel. This Vibrio vulnificus (strain CMCP6) protein is Large ribosomal subunit protein uL4.